A 538-amino-acid polypeptide reads, in one-letter code: Syncytin-1 (538 aa).

The signal sequence occupies residues 1–20 (MALPYHIFLFTVLLPSFTLT). Over 21–443 (APPPCRCMTS…NTGPWGLLSQ (423 aa)) the chain is Extracellular. Residue asparagine 169 is glycosylated (N-linked (GlcNAc...) asparagine). Positions 186–189 (CWIC) match the CXXC motif. Disulfide bonds link cysteine 186–cysteine 189, cysteine 186–cysteine 405, and cysteine 397–cysteine 404. Asparagine 208, asparagine 214, asparagine 234, asparagine 242, and asparagine 281 each carry an N-linked (GlcNAc...) asparagine glycan. A fusion peptide region spans residues 320–340 (ILPFVIGAGVLGALGTGIGGI). Positions 380 to 396 (LQNRRALDLLTAERGGT) are immunosuppression. A CX6CC motif is present at residues 397 to 405 (CLFLGEECC). A glycan (N-linked (GlcNAc...) asparagine) is linked at asparagine 409. Residues 444-464 (WMPWILPFLGPLAAIILLLLF) traverse the membrane as a helical segment. The segment at 465-484 (GPCIFNLLVNFVSSRIEAVK) is essential for the fusiogenic function. The Cytoplasmic portion of the chain corresponds to 465–538 (GPCIFNLLVN…LLRPNSAGSS (74 aa)). Residues 496–538 (KIYRRPLDRPASPRSDVNDIKGTPPEEILTAQPLLRPNSAGSS) are disordered.

Belongs to the gamma type-C retroviral envelope protein family. HERV class-I W env subfamily. The mature envelope protein (Env) consists of a trimer of SU-TM heterodimers attached probably by a labile interchain disulfide bond. Interacts with the C-type lectin CD209/DC-SIGN. Post-translationally, specific enzymatic cleavages in vivo yield mature proteins. Envelope glycoproteins are synthesized as an inactive precursor that is heavily N-glycosylated and processed likely by furin in the Golgi to yield the mature SU and TM proteins. The cleavage site between SU and TM requires the minimal sequence [KR]-X-[KR]-R. In terms of processing, the CXXC motif is highly conserved across a broad range of retroviral envelope proteins. It is thought to participate in the formation of a labile disulfide bond possibly with the CX6CC motif present in the transmembrane protein.

It localises to the cell membrane. The protein resides in the virion. Its function is as follows. This endogenous retroviral envelope protein has retained its original fusogenic properties and participates in trophoblast fusion and the formation of a syncytium during placenta morphogenesis. May recognize and induce fusion through binding of SLC1A4 and SLC1A5. Functionally, endogenous envelope proteins may have kept, lost or modified their original function during evolution. Retroviral envelope proteins mediate receptor recognition and membrane fusion during early infection. The surface protein (SU) mediates receptor recognition, while the transmembrane protein (TM) acts as a class I viral fusion protein. The protein may have at least 3 conformational states: pre-fusion native state, pre-hairpin intermediate state, and post-fusion hairpin state. During viral and target cell membrane fusion, the coiled coil regions (heptad repeats) assume a trimer-of-hairpins structure, positioning the fusion peptide in close proximity to the C-terminal region of the ectodomain. The formation of this structure appears to drive apposition and subsequent fusion of membranes. The sequence is that of Syncytin-1 (ERVW-1) from Pan troglodytes (Chimpanzee).